Consider the following 313-residue polypeptide: Olfactory receptor 4M2 (313 aa).

Topologically, residues 1–25 are extracellular; the sequence is METANYTKVTEFVLTGLSQTPEVQL. Residue N5 is glycosylated (N-linked (GlcNAc...) asparagine). Residues 26 to 49 traverse the membrane as a helical segment; the sequence is VLFVIFLSFYLFILPGNILIICTI. The Cytoplasmic portion of the chain corresponds to 50-57; sequence SLDPHLTS. Residues 58–79 traverse the membrane as a helical segment; the sequence is PMYFLLANLAFLDIWYSSITAP. Residues 80 to 100 are Extracellular-facing; sequence EMLIDFFVERKIISFDGCIAQ. Residues C97 and C189 are joined by a disulfide bond. The helical transmembrane segment at 101–120 threads the bilayer; the sequence is LFFLHFAGASEMFLLTVMAF. Topologically, residues 121–139 are cytoplasmic; the sequence is DLYTAICRPLHYATIMNQR. The helical transmembrane segment at 140–158 threads the bilayer; the sequence is LCCILVALSWRGGFIHSII. The Extracellular segment spans residues 159–195; that stretch reads QVALIVRLPFCGPNELDSYFCDITQVVRIACANTFPE. The chain crosses the membrane as a helical span at residues 196 to 219; it reads ELVMICSSGLISVVCLIALLMSYA. Residues 220-237 lie on the Cytoplasmic side of the membrane; it reads FLLALFKKLSGSGENTNR. A helical transmembrane segment spans residues 238–260; the sequence is AMSTCYSHITIVVLMFGPSIYIY. The Extracellular portion of the chain corresponds to 261–271; the sequence is ARPFDSFSLDK. A helical transmembrane segment spans residues 272 to 291; that stretch reads VVSVFNTLIFPLRNPIIYTL. The Cytoplasmic portion of the chain corresponds to 292–313; it reads RNKEVKAAMRKLVTKYILCKEK.

Belongs to the G-protein coupled receptor 1 family.

It is found in the cell membrane. Functionally, odorant receptor. This chain is Olfactory receptor 4M2 (OR4M2), found in Homo sapiens (Human).